We begin with the raw amino-acid sequence, 80 residues long: Defensin-like protein 18 (80 aa).

The signal sequence occupies residues 1–29 (MAKFCTTITLILVALVLFADFEAPTIVKA). Cystine bridges form between cysteine 32/cysteine 80, cysteine 43/cysteine 64, cysteine 49/cysteine 74, and cysteine 53/cysteine 76.

The protein belongs to the DEFL family.

It localises to the secreted. Functionally, confers broad-spectrum resistance to pathogens. This Arabidopsis thaliana (Mouse-ear cress) protein is Defensin-like protein 18 (PDF1.5).